The primary structure comprises 360 residues: Photosystem II protein D1 (360 aa).

Helical transmembrane passes span 29–46 (YIGW…TATT), 118–133 (HFLL…EWEL), and 142–156 (WICV…AATA). His118 is a binding site for chlorophyll a. Tyr126 is a pheophytin a binding site. Residues Asp170 and Glu189 each contribute to the [CaMn4O5] cluster site. A helical membrane pass occupies residues 197 to 218 (FHMAGVAGVFGGALFSAMHGSL). His198 is a chlorophyll a binding site. A quinone-binding positions include His215 and 264–265 (SF). A Fe cation-binding site is contributed by His215. His272 contributes to the Fe cation binding site. Residues 274-288 (FLGLWPVVGIWLTSI) traverse the membrane as a helical segment. [CaMn4O5] cluster is bound by residues His332, Glu333, Asp342, and Ala344. A propeptide spanning residues 345–360 (DNSLLPVASSSPSINS) is cleaved from the precursor.

It belongs to the reaction center PufL/M/PsbA/D family. As to quaternary structure, PSII is composed of 1 copy each of membrane proteins PsbA, PsbB, PsbC, PsbD, PsbE, PsbF, PsbH, PsbI, PsbJ, PsbK, PsbL, PsbM, PsbT, PsbY, PsbZ, Psb30/Ycf12, at least 3 peripheral proteins of the oxygen-evolving complex and a large number of cofactors. It forms dimeric complexes. The D1/D2 heterodimer binds P680, chlorophylls that are the primary electron donor of PSII, and subsequent electron acceptors. It shares a non-heme iron and each subunit binds pheophytin, quinone, additional chlorophylls, carotenoids and lipids. D1 provides most of the ligands for the Mn4-Ca-O5 cluster of the oxygen-evolving complex (OEC). There is also a Cl(-1) ion associated with D1 and D2, which is required for oxygen evolution. The PSII complex binds additional chlorophylls, carotenoids and specific lipids. serves as cofactor. Post-translationally, tyr-161 forms a radical intermediate that is referred to as redox-active TyrZ, YZ or Y-Z.

It is found in the plastid. Its subcellular location is the chloroplast thylakoid membrane. It carries out the reaction 2 a plastoquinone + 4 hnu + 2 H2O = 2 a plastoquinol + O2. Its function is as follows. Photosystem II (PSII) is a light-driven water:plastoquinone oxidoreductase that uses light energy to abstract electrons from H(2)O, generating O(2) and a proton gradient subsequently used for ATP formation. It consists of a core antenna complex that captures photons, and an electron transfer chain that converts photonic excitation into a charge separation. The D1/D2 (PsbA/PsbD) reaction center heterodimer binds P680, the primary electron donor of PSII as well as several subsequent electron acceptors. The polypeptide is Photosystem II protein D1 (Cyanidium caldarium (Red alga)).